The primary structure comprises 242 residues: Putative pyrimidine-specific ribonucleoside hydrolase RihB (242 aa).

Positions 156 and 168 each coordinate substrate.

Belongs to the IUNH family. RihB subfamily.

The enzyme catalyses a pyrimidine ribonucleoside + H2O = a pyrimidine nucleobase + D-ribose. This is Putative pyrimidine-specific ribonucleoside hydrolase RihB (rihB) from Shigella boydii serotype 4 (strain Sb227).